The primary structure comprises 128 residues: Azurin (128 aa).

One can recognise a Plastocyanin-like domain in the interval 1–128; that stretch reads AECKVTVDST…SMMKGTVTLK (128 aa). A disulfide bridge links C3 with C26. The Cu cation site is built by H46, C112, H117, and M121.

It is found in the periplasm. Its function is as follows. Transfers electrons from cytochrome c551 to cytochrome oxidase. This is Azurin from Pseudomonas putida (Arthrobacter siderocapsulatus).